Here is a 363-residue protein sequence, read N- to C-terminus: Phospho-N-acetylmuramoyl-pentapeptide-transferase (363 aa).

10 helical membrane-spanning segments follow: residues 3–23 (QILF…PLLI), 48–68 (GTPT…YFLA), 83–103 (PTFS…VGFL), 121–141 (AKMI…LQFA), 159–179 (FGWT…ILAM), 192–212 (LATG…VWQF), 234–254 (PLDL…FLWW), 261–281 (IFMG…LAIC), 286–306 (LLMA…VIQV), and 340–360 (FWII…AGWA).

The protein belongs to the glycosyltransferase 4 family. MraY subfamily. Requires Mg(2+) as cofactor.

It is found in the cell membrane. It carries out the reaction UDP-N-acetyl-alpha-D-muramoyl-L-alanyl-gamma-D-glutamyl-meso-2,6-diaminopimeloyl-D-alanyl-D-alanine + di-trans,octa-cis-undecaprenyl phosphate = di-trans,octa-cis-undecaprenyl diphospho-N-acetyl-alpha-D-muramoyl-L-alanyl-D-glutamyl-meso-2,6-diaminopimeloyl-D-alanyl-D-alanine + UMP. The protein operates within cell wall biogenesis; peptidoglycan biosynthesis. Functionally, catalyzes the initial step of the lipid cycle reactions in the biosynthesis of the cell wall peptidoglycan: transfers peptidoglycan precursor phospho-MurNAc-pentapeptide from UDP-MurNAc-pentapeptide onto the lipid carrier undecaprenyl phosphate, yielding undecaprenyl-pyrophosphoryl-MurNAc-pentapeptide, known as lipid I. The polypeptide is Phospho-N-acetylmuramoyl-pentapeptide-transferase (Streptomyces coelicolor (strain ATCC BAA-471 / A3(2) / M145)).